The following is a 61-amino-acid chain: Conotoxin TxMRCL-04 (61 aa).

The first 22 residues, 1–22, serve as a signal peptide directing secretion; it reads MRCLPVFVILLLLIASTPSVDA. A propeptide spanning residues 23 to 46 is cleaved from the precursor; that stretch reads QLKTKDDMSLASFHDNVKRILQIR.

Belongs to the conotoxin T superfamily. In terms of processing, contains 2 disulfide bonds that can be either 'C1-C3, C2-C4' or 'C1-C4, C2-C3', since these disulfide connectivities have been observed for conotoxins with cysteine framework V (for examples, see AC P0DQQ7 and AC P81755). As to expression, expressed by the venom duct.

It is found in the secreted. This is Conotoxin TxMRCL-04 from Conus textile (Cloth-of-gold cone).